The chain runs to 89 residues: Small ribosomal subunit protein uS14A (89 aa).

Belongs to the universal ribosomal protein uS14 family. In terms of assembly, part of the 30S ribosomal subunit. Contacts proteins S3 and S10.

Binds 16S rRNA, required for the assembly of 30S particles and may also be responsible for determining the conformation of the 16S rRNA at the A site. The polypeptide is Small ribosomal subunit protein uS14A (Staphylococcus aureus (strain Newman)).